The following is a 231-amino-acid chain: Ribosyldihydronicotinamide dehydrogenase [quinone] (231 aa).

Residues H12 and 18–21 (FNGS) each bind FAD. A Phosphoserine modification is found at S80. 104–107 (LYWF) contacts FAD. Substrate is bound at residue 127–129 (FDI). FAD is bound by residues 148–151 (TTGG) and Y156. Residues H174 and H178 each coordinate Zn(2+). E194 serves as a coordination point for FAD. At S197 the chain carries Phosphoserine. R201 lines the FAD pocket. C223 is a binding site for Zn(2+).

This sequence belongs to the NAD(P)H dehydrogenase (quinone) family. Homodimer. The cofactor is Zn(2+). Requires FAD as cofactor.

The protein localises to the cytoplasm. The catalysed reaction is 1-(beta-D-ribofuranosyl)-1,4-dihydronicotinamide + a quinone + H(+) = beta-nicotinamide D-riboside + a quinol. Its activity is regulated as follows. Inhibited by melatonin, resveratrol and 5-hydroxytryptamine. The enzyme apparently serves as a quinone reductase in connection with conjugation reactions of hydroquinones involved in detoxification pathways as well as in biosynthetic processes such as the vitamin K-dependent gamma-carboxylation of glutamate residues in prothrombin synthesis. This chain is Ribosyldihydronicotinamide dehydrogenase [quinone] (NQO2), found in Homo sapiens (Human).